Consider the following 124-residue polypeptide: Quinol oxidase subunit 4 (124 aa).

3 helical membrane passes run 16–36 (IVGF…AVYT), 44–64 (LWII…MFMH), and 78–98 (TLFG…IFAA).

It belongs to the cytochrome c oxidase bacterial subunit 4 family.

The protein localises to the cell membrane. It carries out the reaction 2 a quinol + O2 = 2 a quinone + 2 H2O. Catalyzes quinol oxidation with the concomitant reduction of oxygen to water. Major component for energy conversion during vegetative growth. This is Quinol oxidase subunit 4 (qoxD) from Bacillus spizizenii (strain ATCC 23059 / NRRL B-14472 / W23) (Bacillus subtilis subsp. spizizenii).